The following is a 429-amino-acid chain: Probable M18 family aminopeptidase 2 (429 aa).

Zn(2+)-binding residues include His-82, His-156, and His-401.

This sequence belongs to the peptidase M18 family. Zn(2+) is required as a cofactor.

The protein is Probable M18 family aminopeptidase 2 of Pseudomonas aeruginosa (strain UCBPP-PA14).